The sequence spans 376 residues: Tetraacyldisaccharide 4'-kinase (376 aa).

An ATP-binding site is contributed by 51 to 58 (AVGGTGKT).

Belongs to the LpxK family.

It carries out the reaction a lipid A disaccharide + ATP = a lipid IVA + ADP + H(+). It functions in the pathway glycolipid biosynthesis; lipid IV(A) biosynthesis; lipid IV(A) from (3R)-3-hydroxytetradecanoyl-[acyl-carrier-protein] and UDP-N-acetyl-alpha-D-glucosamine: step 6/6. Transfers the gamma-phosphate of ATP to the 4'-position of a tetraacyldisaccharide 1-phosphate intermediate (termed DS-1-P) to form tetraacyldisaccharide 1,4'-bis-phosphate (lipid IVA). This chain is Tetraacyldisaccharide 4'-kinase, found in Bacteroides fragilis (strain YCH46).